The chain runs to 290 residues: Porphobilinogen deaminase (290 aa).

Cys-237 is modified (S-(dipyrrolylmethanemethyl)cysteine).

It belongs to the HMBS family. In terms of assembly, monomer. Dipyrromethane serves as cofactor.

It carries out the reaction 4 porphobilinogen + H2O = hydroxymethylbilane + 4 NH4(+). It functions in the pathway porphyrin-containing compound metabolism; protoporphyrin-IX biosynthesis; coproporphyrinogen-III from 5-aminolevulinate: step 2/4. Its function is as follows. Tetrapolymerization of the monopyrrole PBG into the hydroxymethylbilane pre-uroporphyrinogen in several discrete steps. This Clostridium botulinum (strain 657 / Type Ba4) protein is Porphobilinogen deaminase.